The following is a 123-amino-acid chain: DNA-directed RNA polymerase subunit omega (123 aa).

The tract at residues 67–123 (EESAADSLSLGGFSTADVEAEVGGGPVQPDPGASQERAFDEAADGTAQGSGDPDPTT) is disordered.

This sequence belongs to the RNA polymerase subunit omega family. In terms of assembly, the RNAP catalytic core consists of 2 alpha, 1 beta, 1 beta' and 1 omega subunit. When a sigma factor is associated with the core the holoenzyme is formed, which can initiate transcription.

It catalyses the reaction RNA(n) + a ribonucleoside 5'-triphosphate = RNA(n+1) + diphosphate. Its function is as follows. Promotes RNA polymerase assembly. Latches the N- and C-terminal regions of the beta' subunit thereby facilitating its interaction with the beta and alpha subunits. This is DNA-directed RNA polymerase subunit omega from Halorhodospira halophila (strain DSM 244 / SL1) (Ectothiorhodospira halophila (strain DSM 244 / SL1)).